Consider the following 326-residue polypeptide: Holliday junction branch migration complex subunit RuvB (326 aa).

Residues 1–180 form a large ATPase domain (RuvB-L) region; sequence MKSISCGKEY…FGIPLHLEFY (180 aa). Residues I19, R20, G61, K64, T65, T66, 127–129, R170, Y180, and R217 contribute to the ATP site; that span reads EDF. Mg(2+) is bound at residue T65. The segment at 181 to 251 is small ATPAse domain (RuvB-S); it reads SFEELVNIIK…VADSVLLKLG (71 aa). Residues 254–326 are head domain (RuvB-H); sequence KMGLNKLDMN…QAKEYLSFQH (73 aa). DNA-binding residues include R307 and R312.

It belongs to the RuvB family. As to quaternary structure, homohexamer. Forms an RuvA(8)-RuvB(12)-Holliday junction (HJ) complex. HJ DNA is sandwiched between 2 RuvA tetramers; dsDNA enters through RuvA and exits via RuvB. An RuvB hexamer assembles on each DNA strand where it exits the tetramer. Each RuvB hexamer is contacted by two RuvA subunits (via domain III) on 2 adjacent RuvB subunits; this complex drives branch migration. In the full resolvosome a probable DNA-RuvA(4)-RuvB(12)-RuvC(2) complex forms which resolves the HJ.

The protein resides in the cytoplasm. It catalyses the reaction ATP + H2O = ADP + phosphate + H(+). In terms of biological role, the RuvA-RuvB-RuvC complex processes Holliday junction (HJ) DNA during genetic recombination and DNA repair, while the RuvA-RuvB complex plays an important role in the rescue of blocked DNA replication forks via replication fork reversal (RFR). RuvA specifically binds to HJ cruciform DNA, conferring on it an open structure. The RuvB hexamer acts as an ATP-dependent pump, pulling dsDNA into and through the RuvAB complex. RuvB forms 2 homohexamers on either side of HJ DNA bound by 1 or 2 RuvA tetramers; 4 subunits per hexamer contact DNA at a time. Coordinated motions by a converter formed by DNA-disengaged RuvB subunits stimulates ATP hydrolysis and nucleotide exchange. Immobilization of the converter enables RuvB to convert the ATP-contained energy into a lever motion, pulling 2 nucleotides of DNA out of the RuvA tetramer per ATP hydrolyzed, thus driving DNA branch migration. The RuvB motors rotate together with the DNA substrate, which together with the progressing nucleotide cycle form the mechanistic basis for DNA recombination by continuous HJ branch migration. Branch migration allows RuvC to scan DNA until it finds its consensus sequence, where it cleaves and resolves cruciform DNA. The chain is Holliday junction branch migration complex subunit RuvB from Wolbachia pipientis wMel.